Here is a 691-residue protein sequence, read N- to C-terminus: Beta-galactosidase III (691 aa).

Arg-121 and Asn-159 together coordinate substrate. Glu-160 serves as the catalytic Proton donor. The active-site Nucleophile is Glu-318. Residues Trp-326 and 366-369 each bind substrate; that span reads EKWH.

Belongs to the glycosyl hydrolase 42 family.

It catalyses the reaction Hydrolysis of terminal non-reducing beta-D-galactose residues in beta-D-galactosides.. Functionally, specific for beta-D-anomer-linked galactoside substrates. Hydrolyzes o-nitrophenyl-beta-D-galactopyranoside (ONPG), chromogen 5-bromo-4-chloro-3-indolyl-beta-D-galactopyranoside (X-gal) and to a lesser extent lactose. Hydrolyzes p-nitrophenyl-beta-D-galacturonide very slightly. Does not hydrolyze maltose, sucrose, raffinose or melibiose. Has some transgalactosylation activity yielding galacto-oligosaccharides (GaOS), including O-beta-D-galactopyranosyl-(1,3)-O-beta-D-galactopyranosyl-(1-4)-D-glucopyranose. The sequence is that of Beta-galactosidase III from Bifidobacterium longum subsp. infantis.